Reading from the N-terminus, the 97-residue chain is MQISAALLCVLLTAAAFTVHVWAQPDGTNSSTCCYVKKQKIPKRNLKSYRKITSSRCPWEAVIFKTKKGMEVCAEAHQKWVEEAIAYLDMKTSTPKP.

An N-terminal signal peptide occupies residues 1–23; sequence MQISAALLCVLLTAAAFTVHVWA. A Pyrrolidone carboxylic acid modification is found at glutamine 24. Residue asparagine 29 is glycosylated (N-linked (GlcNAc...) asparagine). 2 cysteine pairs are disulfide-bonded: cysteine 33–cysteine 57 and cysteine 34–cysteine 73.

It belongs to the intercrine beta (chemokine CC) family. In terms of assembly, monomer. Interacts with TNFAIP6 (via Link domain).

The protein resides in the secreted. In terms of biological role, chemotactic factor that attracts monocytes and eosinophils, but not neutrophils. Augments monocyte anti-tumor activity. The sequence is that of C-C motif chemokine 7 (Ccl7) from Rattus norvegicus (Rat).